Reading from the N-terminus, the 253-residue chain is A-type ATP synthase subunit B (253 aa).

This sequence belongs to the ATPase alpha/beta chains family. As to quaternary structure, has multiple subunits with at least A(3), B(3), C, D, E, F, H, I and proteolipid K(x).

Its subcellular location is the cell membrane. Component of the A-type ATP synthase that produces ATP from ADP in the presence of a proton gradient across the membrane. The B chain is a regulatory subunit. The polypeptide is A-type ATP synthase subunit B (Methanothermococcus thermolithotrophicus (Methanococcus thermolithotrophicus)).